Here is a 242-residue protein sequence, read N- to C-terminus: MATNGENGRHQEVGHKSLLQSDALYQYILETSVYPREPEPMKELREITAKHPWNLMTTSADEGQFLSMLLKLINAKNTMEIGVFTGYSLLATAMALPDDGKILAMDINRENYEIGLPIIEKAGLAHKIVFREGPALPVLDQMIEDGKYHGSYDFIFVDADKDNYLNYHKRLIDLVKVGGLIGYDNTLWNGSVVAPPDAPLRKYVRYYRDFVLELNKALAADSRIEICQLPVGDGITLCRRIS.

K16 provides a ligand contact to substrate. Residues T58, E80, 82-83 (GV), S88, D106, and A135 contribute to the S-adenosyl-L-methionine site. D158 is a binding site for substrate. D158 serves as a coordination point for a divalent metal cation. D160 is a binding site for S-adenosyl-L-methionine. Residues D184 and N185 each contribute to the a divalent metal cation site. Residue N189 participates in substrate binding.

It belongs to the class I-like SAM-binding methyltransferase superfamily. Cation-dependent O-methyltransferase family. CCoAMT subfamily. Mg(2+) is required as a cofactor. In terms of tissue distribution, mostly expressed in the bottom and middle parts of the stems.

It catalyses the reaction (E)-caffeoyl-CoA + S-adenosyl-L-methionine = (E)-feruloyl-CoA + S-adenosyl-L-homocysteine + H(+). The protein operates within aromatic compound metabolism; phenylpropanoid biosynthesis. Functionally, methylates caffeoyl-CoA to feruloyl-CoA and 5-hydroxyferuloyl-CoA to sinapoyl-CoA. Plays a role in the synthesis of feruloylated polysaccharides. Involved in the reinforcement of the plant cell wall. Also involved in the responding to wounding or pathogen challenge by the increased formation of cell wall-bound ferulic acid polymers. Methylates 5-hydroxyferulolyl-CoA more efficiently than caffeoyl-CoA. This Nicotiana tabacum (Common tobacco) protein is Caffeoyl-CoA O-methyltransferase 2 (CCOAOMT2).